The chain runs to 476 residues: Aspartyl/glutamyl-tRNA(Asn/Gln) amidotransferase subunit B (476 aa).

It belongs to the GatB/GatE family. GatB subfamily. As to quaternary structure, heterotrimer of A, B and C subunits.

It catalyses the reaction L-glutamyl-tRNA(Gln) + L-glutamine + ATP + H2O = L-glutaminyl-tRNA(Gln) + L-glutamate + ADP + phosphate + H(+). The catalysed reaction is L-aspartyl-tRNA(Asn) + L-glutamine + ATP + H2O = L-asparaginyl-tRNA(Asn) + L-glutamate + ADP + phosphate + 2 H(+). Functionally, allows the formation of correctly charged Asn-tRNA(Asn) or Gln-tRNA(Gln) through the transamidation of misacylated Asp-tRNA(Asn) or Glu-tRNA(Gln) in organisms which lack either or both of asparaginyl-tRNA or glutaminyl-tRNA synthetases. The reaction takes place in the presence of glutamine and ATP through an activated phospho-Asp-tRNA(Asn) or phospho-Glu-tRNA(Gln). The protein is Aspartyl/glutamyl-tRNA(Asn/Gln) amidotransferase subunit B of Lactobacillus johnsonii (strain CNCM I-12250 / La1 / NCC 533).